Consider the following 202-residue polypeptide: uncharacterized protein (202 aa).

Positions 1-78 (MKLVGSYTSP…YIELMNVAPA (78 aa)) constitute a GST N-terminal domain. Glutathione-binding positions include Ser9, Val49, and 62–63 (DS). The region spanning 83 to 202 (DPLESLRVRK…SFARTEPPKA (120 aa)) is the GST C-terminal domain.

Belongs to the GST superfamily. HSP26 family.

In terms of biological role, glutathione (GSH) transferase homolog, that might be involved in selenium metabolism. This is an uncharacterized protein from Escherichia coli (strain K12).